The sequence spans 390 residues: Ribosomal RNA small subunit methyltransferase H (390 aa).

S-adenosyl-L-methionine is bound by residues 47 to 49 (GGH), Asp66, Phe93, Asp122, and Gln129. Positions 282 to 390 (SKTPPGLPID…SHREDVEGEQ (109 aa)) are disordered. Residues 305–316 (GSEKADEQENNK) show a composition bias toward basic and acidic residues. The segment covering 348–358 (SGSSTTYSARS) has biased composition (polar residues). 2 stretches are compositionally biased toward basic and acidic residues: residues 360 to 372 (SRHEAHREGREHL) and 381 to 390 (SHREDVEGEQ).

This sequence belongs to the methyltransferase superfamily. RsmH family.

The protein resides in the cytoplasm. It catalyses the reaction cytidine(1402) in 16S rRNA + S-adenosyl-L-methionine = N(4)-methylcytidine(1402) in 16S rRNA + S-adenosyl-L-homocysteine + H(+). In terms of biological role, specifically methylates the N4 position of cytidine in position 1402 (C1402) of 16S rRNA. The protein is Ribosomal RNA small subunit methyltransferase H of Corynebacterium kroppenstedtii (strain DSM 44385 / JCM 11950 / CIP 105744 / CCUG 35717).